A 451-amino-acid chain; its full sequence is UDP-glycosyltransferase 13 (451 aa).

The Proton acceptor role is filled by H15. H15 provides a ligand contact to an anthocyanidin. D93 serves as the catalytic Charge relay. UDP-alpha-D-glucose contacts are provided by A326, Q328, H343, W346, N347, S348, and E351. A366 contributes to the an anthocyanidin binding site. UDP-alpha-D-glucose contacts are provided by E367 and Q368.

Belongs to the UDP-glycosyltransferase family. Expressed in roots. Detected in stems and leaves.

It carries out the reaction a 7-hydroxyisoflavone + UDP-alpha-D-glucose = a 7-hydroxyisoflavone 7-O-beta-D-glucoside + UDP + H(+). Functionally, isoflavone 7-O-glucosyltransferase converting daidzein to daidzin, genistein to genistin and formononetin to ononin. Shows some activity toward the flavanones liquiritigenin and naringenin, but not toward cyanidin, isoliquiritigenin, apigenin, luteolin, kaempferol, quercetin, daidzin and puerarin. In Pueraria montana var. lobata (Kudzu vine), this protein is UDP-glycosyltransferase 13.